Consider the following 332-residue polypeptide: Glyceraldehyde-3-phosphate dehydrogenase 2 (332 aa).

NAD(+) contacts are provided by residues 11–12, Asp-32, and Arg-77; that span reads RI. D-glyceraldehyde 3-phosphate-binding positions include 148-150, Thr-179, 208-209, and Arg-231; these read SCT and TG. Cys-149 functions as the Nucleophile in the catalytic mechanism. Tyr-273 is subject to Phosphotyrosine. At Thr-274 the chain carries Phosphothreonine. Asn-313 serves as a coordination point for NAD(+).

This sequence belongs to the glyceraldehyde-3-phosphate dehydrogenase family. In terms of assembly, homotetramer.

It localises to the cytoplasm. The catalysed reaction is D-glyceraldehyde 3-phosphate + phosphate + NAD(+) = (2R)-3-phospho-glyceroyl phosphate + NADH + H(+). It functions in the pathway carbohydrate degradation; glycolysis; pyruvate from D-glyceraldehyde 3-phosphate: step 1/5. This is Glyceraldehyde-3-phosphate dehydrogenase 2 (Gapdh2) from Drosophila melanogaster (Fruit fly).